We begin with the raw amino-acid sequence, 157 residues long: Protein Smg (157 aa).

Belongs to the Smg family.

In Buchnera aphidicola subsp. Acyrthosiphon pisum (strain Tuc7), this protein is Protein Smg.